The primary structure comprises 154 residues: Myoglobin (154 aa).

Positions 2–148 (GLSDGEWQLV…FRNDMAAKYK (147 aa)) constitute a Globin domain. Position 4 is a phosphoserine (Ser4). His65 lines the nitrite pocket. Position 65 (His65) interacts with O2. Thr68 bears the Phosphothreonine mark. His94 contributes to the heme b binding site.

This sequence belongs to the globin family. Monomeric.

The protein resides in the cytoplasm. The protein localises to the sarcoplasm. The catalysed reaction is Fe(III)-heme b-[protein] + nitric oxide + H2O = Fe(II)-heme b-[protein] + nitrite + 2 H(+). It catalyses the reaction H2O2 + AH2 = A + 2 H2O. Monomeric heme protein which primary function is to store oxygen and facilitate its diffusion within muscle tissues. Reversibly binds oxygen through a pentacoordinated heme iron and enables its timely and efficient release as needed during periods of heightened demand. Depending on the oxidative conditions of tissues and cells, and in addition to its ability to bind oxygen, it also has a nitrite reductase activity whereby it regulates the production of bioactive nitric oxide. Under stress conditions, like hypoxia and anoxia, it also protects cells against reactive oxygen species thanks to its pseudoperoxidase activity. This Didelphis virginiana (North American opossum) protein is Myoglobin (MB).